The chain runs to 380 residues: MAPNLRKSHPLLKMINNSLIDLPTPSNISAWWNFGSLLGICLMTQILTGLLLAMHYTADTTLAFSSIAHTCRNVQYGWLIRNLHANGASFFFICIYLHIGRGFYYGSYLNKETWNTGILLLLTLMATAFVGYVLPWGQMSFWGATVITNLFSAIPYIGQTLVEWAWGGFSVDNPTLTRFFALHFLLPFMIAGLTLIHLTFLHESGSNNPLGILSNCDKIPFHPYFTLKDILGFTLMFLPLTALALFSPTLLGDPENFTPANPLVTPPHIKPEWYFLFAYAILRSIPNKLGGVLALAASVLVLFLSPLLHKSKQRTLTFRPLSQLLFWLLVTNLFILTWIGSQPVEHPFIIIGQLASITYFTILLVLFPTIAALENKMLNY.

Transmembrane regions (helical) follow at residues Phe-34–Met-54, Trp-78–Ile-99, Trp-114–Leu-134, and Phe-179–Thr-199. The heme b site is built by His-84 and His-98. Heme b contacts are provided by His-183 and His-197. Residue His-202 participates in a ubiquinone binding. A run of 4 helical transmembrane segments spans residues Leu-227–Ser-247, Leu-289–His-309, Leu-321–Ser-341, and Phe-348–Pro-368.

This sequence belongs to the cytochrome b family. As to quaternary structure, the cytochrome bc1 complex contains 11 subunits: 3 respiratory subunits (MT-CYB, CYC1 and UQCRFS1), 2 core proteins (UQCRC1 and UQCRC2) and 6 low-molecular weight proteins (UQCRH/QCR6, UQCRB/QCR7, UQCRQ/QCR8, UQCR10/QCR9, UQCR11/QCR10 and a cleavage product of UQCRFS1). This cytochrome bc1 complex then forms a dimer. It depends on heme b as a cofactor.

It is found in the mitochondrion inner membrane. In terms of biological role, component of the ubiquinol-cytochrome c reductase complex (complex III or cytochrome b-c1 complex) that is part of the mitochondrial respiratory chain. The b-c1 complex mediates electron transfer from ubiquinol to cytochrome c. Contributes to the generation of a proton gradient across the mitochondrial membrane that is then used for ATP synthesis. The sequence is that of Cytochrome b (MT-CYB) from Thalassarche impavida (Albatross).